Reading from the N-terminus, the 113-residue chain is Na(+)/H(+) antiporter subunit C1 (113 aa).

The next 3 membrane-spanning stretches (helical) occupy residues 1 to 21 (MEII…YLVL), 28 to 48 (IVMG…TMGG), and 72 to 92 (LILT…VLAF).

Belongs to the CPA3 antiporters (TC 2.A.63) subunit C family. In terms of assembly, may form a heterooligomeric complex that consists of seven subunits: mnhA1, mnhB1, mnhC1, mnhD1, mnhE1, mnhF1 and mnhG1.

Its subcellular location is the cell membrane. Mnh complex is a Na(+)/H(+) antiporter involved in Na(+) excretion. The polypeptide is Na(+)/H(+) antiporter subunit C1 (mnhC1) (Staphylococcus haemolyticus (strain JCSC1435)).